The sequence spans 217 residues: GrpE protein homolog 1, mitochondrial (217 aa).

A mitochondrion-targeting transit peptide spans 1-27 (MAARCVRLARGSLPAFALSLRSSPRLL). Position 94 is an N6-acetyllysine; alternate (lysine 94). Lysine 94 bears the N6-succinyllysine; alternate mark. Residue lysine 100 is modified to N6-acetyllysine. An N6-succinyllysine modification is found at lysine 120. Lysine 215 is subject to N6-acetyllysine; alternate. Position 215 is an N6-succinyllysine; alternate (lysine 215).

This sequence belongs to the GrpE family. In terms of assembly, probable component of the PAM complex at least composed of a mitochondrial HSP70 protein, GRPEL1 or GRPEL2, TIMM44, TIMM16/PAM16 and TIMM14/DNAJC19. Binds to HSP70, HSC70 and HSJ1B.

It localises to the mitochondrion matrix. Essential component of the PAM complex, a complex required for the translocation of transit peptide-containing proteins from the inner membrane into the mitochondrial matrix in an ATP-dependent manner. Seems to control the nucleotide-dependent binding of mitochondrial HSP70 to substrate proteins. The polypeptide is GrpE protein homolog 1, mitochondrial (GRPEL1) (Bos taurus (Bovine)).